The following is a 138-amino-acid chain: Small ribosomal subunit protein uS11 (138 aa).

Low complexity predominate over residues 1 to 12 (MPPKKAAASSAK). The segment at 1–28 (MPPKKAAASSAKKGQKTRRREKKNVPHG) is disordered. Basic residues predominate over residues 13-22 (KGQKTRRREK).

It belongs to the universal ribosomal protein uS11 family. In terms of assembly, part of the 30S ribosomal subunit. Interacts with proteins S7 and S18. Binds to IF-3.

Located on the platform of the 30S subunit, it bridges several disparate RNA helices of the 16S rRNA. Forms part of the Shine-Dalgarno cleft in the 70S ribosome. This is Small ribosomal subunit protein uS11 from Mycobacterium sp. (strain JLS).